Reading from the N-terminus, the 74-residue chain is Small ribosomal subunit protein bS18 (74 aa).

This sequence belongs to the bacterial ribosomal protein bS18 family. In terms of assembly, part of the 30S ribosomal subunit. Forms a tight heterodimer with protein bS6.

Binds as a heterodimer with protein bS6 to the central domain of the 16S rRNA, where it helps stabilize the platform of the 30S subunit. The polypeptide is Small ribosomal subunit protein bS18 (Thioalkalivibrio sulfidiphilus (strain HL-EbGR7)).